The following is a 191-amino-acid chain: uncharacterized protein (191 aa).

An N-terminal signal peptide occupies residues 1–22 (MKSLRLMLCAMPLMLTGCSTMS).

This is an uncharacterized protein from Escherichia coli (strain K12).